Reading from the N-terminus, the 745-residue chain is Copper-exporting P-type ATPase B (745 aa).

The segment at 1–76 (MNNGIDPENE…GMDHSHMDHE (76 aa)) is disordered. Residues 1–108 (MNNGIDPENE…HMGNFKQKFW (108 aa)) lie on the Cytoplasmic side of the membrane. A compositionally biased stretch (basic and acidic residues) spans 36–76 (LQEHGKMENMDQHHTHGHMERHQQMDHGHMSGMDHSHMDHE). A run of 3 repeats spans residues 60-71 (MDHGHMSGMDHS), 73-84 (MDHEDMSGMNHS), and 86-97 (MGHENMSGMDHS). The interval 60 to 97 (MDHGHMSGMDHSHMDHEDMSGMNHSHMGHENMSGMDHS) is 3 X 12 AA approximate repeats. Residues 109–128 (LSLILAIPIILFSPMMGMSF) traverse the membrane as a helical segment. Residues 129–139 (PFQVTFPGSNW) lie on the Extracellular side of the membrane. The helical transmembrane segment at 140 to 160 (VVLVLATILFIYGGQPFLSGA) threads the bilayer. The Cytoplasmic segment spans residues 161–170 (KMELKQKSPA). A helical transmembrane segment spans residues 171–191 (MMTLIAMGITVAYVYSVYSFI). The Extracellular segment spans residues 192–200 (ANLINPHTH). The helical transmembrane segment at 201–217 (VMDFFWELATLIVIMLL) threads the bilayer. Residues 218 to 359 (GHWIEMNAVS…EFLSDKVAKW (142 aa)) are Cytoplasmic-facing. A helical transmembrane segment spans residues 360–379 (LFYVALVVGIIAFIAWLFLA). Residues 380-388 (NLPDALERM) are Extracellular-facing. The chain crosses the membrane as a helical span at residues 389-409 (VTVFIIACPHALGLAIPLVVA). Over 410 to 703 (RSTSIAAKNG…QNLWWGAGYN (294 aa)) the chain is Cytoplasmic. Aspartate 440 acts as the 4-aspartylphosphate intermediate in catalysis. Residues aspartate 638 and aspartate 642 each contribute to the Mg(2+) site. A helical membrane pass occupies residues 704–721 (IIAIPLAAGILAPIGLIL). Residues 722–723 (SP) lie on the Extracellular side of the membrane. A helical transmembrane segment spans residues 724 to 744 (AVGAVLMSLSTVVVALNALTL). Position 745 (lysine 745) is a topological domain, cytoplasmic.

Belongs to the cation transport ATPase (P-type) (TC 3.A.3) family. Type IB subfamily. As to quaternary structure, monomer.

It is found in the cell membrane. The catalysed reaction is Cu(+)(in) + ATP + H2O = Cu(+)(out) + ADP + phosphate + H(+). Inhibited by vanadate. Functionally, involved in copper export. Can also export silver. This is Copper-exporting P-type ATPase B (copB) from Enterococcus hirae (strain ATCC 9790 / DSM 20160 / JCM 8729 / LMG 6399 / NBRC 3181 / NCIMB 6459 / NCDO 1258 / NCTC 12367 / WDCM 00089 / R).